An 861-amino-acid polypeptide reads, in one-letter code: Homeobox-leucine zipper protein HOX29 (861 aa).

The segment at residues 2-65 (DASKYVRYTP…NRRCREKQRK (64 aa)) is a DNA-binding region (homeobox). Residues 57–99 (RRCREKQRKESSRLQALNRKLTAMNKLLMEENDRLQKQVSQLV) adopt a coiled-coil conformation. The START domain maps to 162–390 (RDASPAGLMS…VAHEDTRSVI (229 aa)).

This sequence belongs to the HD-ZIP homeobox family. Class III subfamily. Expressed in roots, stems and leaf blades.

The protein resides in the nucleus. Probable transcription factor. The protein is Homeobox-leucine zipper protein HOX29 (HOX29) of Oryza sativa subsp. indica (Rice).